The sequence spans 192 residues: Ion-translocating oxidoreductase complex subunit A (192 aa).

Transmembrane regions (helical) follow at residues 5 to 25 (LLLLISTVLVNNFVLVKFLGL), 39 to 59 (IGMSMATTFVLTLASVLSYLV), 65 to 85 (LPFELGYLRTMSFILVIAVVV), 102 to 122 (ALGIYLPLITTNCAVLGVALL), 134 to 154 (AIYGFGAAVGFSLVLILFSAM), and 171 to 191 (AIAMITAGLMSLAFMGFTGLV).

This sequence belongs to the NqrDE/RnfAE family. As to quaternary structure, the complex is composed of six subunits: RnfA, RnfB, RnfC, RnfD, RnfE and RnfG.

Its subcellular location is the cell inner membrane. Part of a membrane-bound complex that couples electron transfer with translocation of ions across the membrane. This Shewanella sediminis (strain HAW-EB3) protein is Ion-translocating oxidoreductase complex subunit A.